The chain runs to 92 residues: Small ribosomal subunit protein uS19c (92 aa).

Belongs to the universal ribosomal protein uS19 family.

The protein resides in the plastid. The protein localises to the chloroplast. Functionally, protein S19 forms a complex with S13 that binds strongly to the 16S ribosomal RNA. The protein is Small ribosomal subunit protein uS19c of Oedogonium cardiacum (Filamentous green alga).